Reading from the N-terminus, the 291-residue chain is Pituitary-specific positive transcription factor 1 (291 aa).

Positions 5–13 (AFTSADTFI) match the 9aaTAD motif. Residues 124 to 198 (MDSPEIRELE…ILSKWLEEAE (75 aa)) form the POU-specific domain. A DNA-binding region (homeobox) is located at residues 214 to 273 (KRKRRTTISIAAKDALERHFGEQNKPSSQEIMRMAEELNLEKEVVRVWFCNRRQREKRVK).

Belongs to the POU transcription factor family. Class-1 subfamily. Interacts with PITX1. Interacts with LHX3. Interacts with ELK1.

The protein localises to the nucleus. Its function is as follows. Transcription factor involved in the specification of the lactotrope, somatotrope, and thyrotrope phenotypes in the developing anterior pituitary. Specifically binds to the consensus sequence 5'-TAAAT-3'. Activates growth hormone and prolactin genes. The sequence is that of Pituitary-specific positive transcription factor 1 (POU1F1) from Homo sapiens (Human).